The sequence spans 269 residues: Hydroxyethylthiazole kinase (269 aa).

Met43 is a substrate binding site. Arg119 and Ser165 together coordinate ATP. Substrate is bound at residue Ala192.

The protein belongs to the Thz kinase family. It depends on Mg(2+) as a cofactor.

It catalyses the reaction 5-(2-hydroxyethyl)-4-methylthiazole + ATP = 4-methyl-5-(2-phosphooxyethyl)-thiazole + ADP + H(+). It participates in cofactor biosynthesis; thiamine diphosphate biosynthesis; 4-methyl-5-(2-phosphoethyl)-thiazole from 5-(2-hydroxyethyl)-4-methylthiazole: step 1/1. Its function is as follows. Catalyzes the phosphorylation of the hydroxyl group of 4-methyl-5-beta-hydroxyethylthiazole (THZ). In Glaesserella parasuis serovar 5 (strain SH0165) (Haemophilus parasuis), this protein is Hydroxyethylthiazole kinase.